Reading from the N-terminus, the 200-residue chain is Gamma-glutamyl-CDP-amidate hydrolase (200 aa).

The region spanning 20–200 is the Glutamine amidotransferase type-1 domain; it reads ECLALDWGKL…LKEWFSLIKE (181 aa). Catalysis depends on cysteine 101, which acts as the Nucleophile. Catalysis depends on residues histidine 178 and glutamate 180.

It carries out the reaction N(5)-(cytidine 5'-diphosphoramidyl)-L-glutamine + H2O = cytidine 5'-diphosphoramidate + L-glutamate + H(+). Its pathway is capsule biogenesis; capsule polysaccharide biosynthesis. Involved in the biosynthesis of the O-methyl phosphoramidate (MeOPN) group found on the capsular polysaccharide (CPS) of C.jejuni. Catalyzes the hydrolysis of CDP-L-glutamine to L-glutamate and cytidine diphosphoramidate. The chain is Gamma-glutamyl-CDP-amidate hydrolase from Campylobacter jejuni subsp. jejuni serotype O:2 (strain ATCC 700819 / NCTC 11168).